The following is a 138-amino-acid chain: Small ribosomal subunit protein uS11B (138 aa).

Residues 118-138 (DVTPVPSDSTRKKGGRRGRRL) form a disordered region. Basic residues predominate over residues 129–138 (KKGGRRGRRL).

This sequence belongs to the universal ribosomal protein uS11 family. As to quaternary structure, component of the small ribosomal subunit (SSU). Mature yeast ribosomes consist of a small (40S) and a large (60S) subunit. The 40S small subunit contains 1 molecule of ribosomal RNA (18S rRNA) and 33 different proteins (encoded by 57 genes). The large 60S subunit contains 3 rRNA molecules (25S, 5.8S and 5S rRNA) and 46 different proteins (encoded by 81 genes). uS11 interacts with eS1 forming part of the mRNA exit tunnel. uS11 interacts with snoRNA U3. uS11 interacts with MPP10. Component of the ribosomal small subunit (SSU) processome composed of at least 40 protein subunits and snoRNA U3.

The protein resides in the cytoplasm. It localises to the nucleus. The protein localises to the nucleolus. Functionally, component of the ribosome, a large ribonucleoprotein complex responsible for the synthesis of proteins in the cell. The small ribosomal subunit (SSU) binds messenger RNAs (mRNAs) and translates the encoded message by selecting cognate aminoacyl-transfer RNA (tRNA) molecules. The large subunit (LSU) contains the ribosomal catalytic site termed the peptidyl transferase center (PTC), which catalyzes the formation of peptide bonds, thereby polymerizing the amino acids delivered by tRNAs into a polypeptide chain. The nascent polypeptides leave the ribosome through a tunnel in the LSU and interact with protein factors that function in enzymatic processing, targeting, and the membrane insertion of nascent chains at the exit of the ribosomal tunnel. uS11 is involved in nucleolar processing of pre-18S ribosomal RNA and ribosome assembly. The polypeptide is Small ribosomal subunit protein uS11B (Saccharomyces cerevisiae (strain ATCC 204508 / S288c) (Baker's yeast)).